The chain runs to 268 residues: Putative type I specificity subunit S.MpnORF365P (268 aa).

Belongs to the type-I restriction system S methylase family. The methyltransferase is composed of M and S polypeptides.

Functionally, the specificity (S) subunit of a type I methyltransferase (MTase); this subunit dictates DNA sequence specificity. The single R subunit has multiple frameshifts and is probably not expressed. The protein is Putative type I specificity subunit S.MpnORF365P of Mycoplasma pneumoniae (strain ATCC 29342 / M129 / Subtype 1) (Mycoplasmoides pneumoniae).